The primary structure comprises 504 residues: Maturase K (504 aa).

It belongs to the intron maturase 2 family. MatK subfamily.

The protein localises to the plastid. It localises to the chloroplast. In terms of biological role, usually encoded in the trnK tRNA gene intron. Probably assists in splicing its own and other chloroplast group II introns. The protein is Maturase K of Aruncus dioicus (Goat's beard).